The chain runs to 474 residues: Transcription termination factor Rho (474 aa).

The tract at residues 1–60 is disordered; sequence MTEELDNTPSPAGDIPQETLPKPLPAPEETAGEQPAAAPEENRGNAVREEEEAAPVLEQI. Residues 107 to 182 enclose the Rho RNA-BD domain; that stretch reads EVVVSGVMEQ…ASVISVEDIP (76 aa). Residues 226–231, 238–243, and R269 each bind ATP; these read GKGQRG and RGGKTV.

The protein belongs to the Rho family. In terms of assembly, homohexamer. The homohexamer assembles into an open ring structure.

In terms of biological role, facilitates transcription termination by a mechanism that involves Rho binding to the nascent RNA, activation of Rho's RNA-dependent ATPase activity, and release of the mRNA from the DNA template. This Akkermansia muciniphila (strain ATCC BAA-835 / DSM 22959 / JCM 33894 / BCRC 81048 / CCUG 64013 / CIP 107961 / Muc) protein is Transcription termination factor Rho.